The sequence spans 622 residues: MAENTEGDLNSNLLHAPYHTGDPQLDTAIGQWLRWDKNPKTKEQIENLLRNGMNKELRDRLCCRMTFGTAGLRSAMGAGFCYINDLTVIQSTQGMYKYLERCFSDFKQRGFVVGYDTRGQVTSSCSSQRLAKLTAAVLLAKDVPVYLFSRYVPTPFVPYAVQKLKAVAGVMITASHNRKEDNGYKVYWETGAQITSPHDKEILKCIEECVEPWNGSWNDNLVDTSPLKRDPLQDICRRYMEDLKKICFYRELNSKTTLKFVHTSFHGVGHDYVQLAFKVFGFKPPIPVPEQKDPDPDFSTVKCPNPEEGESVLELSLRLAEKENARVVLATDPDADRLAAAELQENGCWKVFTGNELAALFGWWMFDCWKKNKSRNADVKNVYMLATTVSSKILKAIALKEGFHFEETLPGFKWIGSRIIDLLENGKEVLFAFEESIGFLCGTSVLDKDGVSAAVVVAEMASYLETMNITLKQQLVKVYEKYGYHISKTSYFLCYEPPTIKSIFERLRNFDSPKEYPKFCGTFAILHVRDVTTGYDSSQPNKKSVLPVSKNSQMITFTFQNGCVATLRTSGTEPKIKYYAEMCASPDQSDTALLEEELKKLIDALIENFLQPSKNGLIWRSV.

Alpha-D-glucose 1,6-bisphosphate-binding residues include Arg73 and Ser175. Ser175 functions as the Phosphoserine intermediate in the catalytic mechanism. 3 residues coordinate Mg(2+): Ser175, Asp332, and Asp334. Ser175 carries the post-translational modification Phosphoserine. Positions 336, 337, 434, 436, and 448 each coordinate alpha-D-glucose 1,6-bisphosphate.

The protein belongs to the phosphohexose mutase family.

The protein resides in the cytoplasm. It is found in the cytosol. The catalysed reaction is (2R)-3-phospho-glyceroyl phosphate + alpha-D-glucose 1-phosphate = alpha-D-glucose 1,6-bisphosphate + (2R)-3-phosphoglycerate + H(+). The enzyme catalyses alpha-D-glucose 6-phosphate + (2R)-3-phospho-glyceroyl phosphate = alpha-D-glucose 1,6-bisphosphate + (2R)-3-phosphoglycerate + H(+). It catalyses the reaction (2R)-3-phospho-glyceroyl phosphate + alpha-D-ribose 1-phosphate = alpha-D-ribose 1,5-bisphosphate + (2R)-3-phosphoglycerate + H(+). It carries out the reaction 2-deoxy-alpha-D-ribose 1-phosphate + (2R)-3-phospho-glyceroyl phosphate = 2-deoxy-alpha-D-ribose 1,5-bisphosphate + (2R)-3-phosphoglycerate + H(+). The catalysed reaction is (2R)-3-phospho-glyceroyl phosphate + alpha-D-mannose 1-phosphate = alpha-D-mannose 1,6-bisphosphate + (2R)-3-phosphoglycerate + H(+). Its function is as follows. Glucose 1,6-bisphosphate synthase using 1,3-bisphosphoglycerate as a phosphate donor and a series of 1-phosphate sugars, including glucose 1-phosphate, mannose 1-phosphate, ribose 1-phosphate and deoxyribose 1-phosphate, as acceptors. In vitro, also exhibits very low phosphopentomutase and phosphoglucomutase activity which are most probably not physiologically relevant. The chain is Glucose 1,6-bisphosphate synthase from Homo sapiens (Human).